The sequence spans 1383 residues: DNA-directed RNA polymerase subunit beta (1383 aa).

The protein belongs to the RNA polymerase beta chain family. As to quaternary structure, the RNAP catalytic core consists of 2 alpha, 1 beta, 1 beta' and 1 omega subunit. When a sigma factor is associated with the core the holoenzyme is formed, which can initiate transcription.

It catalyses the reaction RNA(n) + a ribonucleoside 5'-triphosphate = RNA(n+1) + diphosphate. DNA-dependent RNA polymerase catalyzes the transcription of DNA into RNA using the four ribonucleoside triphosphates as substrates. This Bartonella tribocorum (strain CIP 105476 / IBS 506) protein is DNA-directed RNA polymerase subunit beta.